Here is a 170-residue protein sequence, read N- to C-terminus: NADH-quinone oxidoreductase subunit B (170 aa).

Residues C46, C47, C111, and C141 each coordinate [4Fe-4S] cluster.

The protein belongs to the complex I 20 kDa subunit family. In terms of assembly, NDH-1 is composed of 14 different subunits. Subunits NuoB, C, D, E, F, and G constitute the peripheral sector of the complex. It depends on [4Fe-4S] cluster as a cofactor.

The protein localises to the cell membrane. It catalyses the reaction a quinone + NADH + 5 H(+)(in) = a quinol + NAD(+) + 4 H(+)(out). Its function is as follows. NDH-1 shuttles electrons from NADH, via FMN and iron-sulfur (Fe-S) centers, to quinones in the respiratory chain. The immediate electron acceptor for the enzyme in this species is believed to be a menaquinone. Couples the redox reaction to proton translocation (for every two electrons transferred, four hydrogen ions are translocated across the cytoplasmic membrane), and thus conserves the redox energy in a proton gradient. This Geobacillus sp. (strain WCH70) protein is NADH-quinone oxidoreductase subunit B.